A 405-amino-acid polypeptide reads, in one-letter code: Cytoplasmic tRNA 2-thiolation protein 2 (405 aa).

It belongs to the CTU2/NCS2 family.

Its subcellular location is the cytoplasm. Its pathway is tRNA modification; 5-methoxycarbonylmethyl-2-thiouridine-tRNA biosynthesis. Functionally, plays a central role in 2-thiolation of mcm(5)S(2)U at tRNA wobble positions of tRNA(Lys), tRNA(Glu) and tRNA(Gln). May act by forming a heterodimer with NCS6/CTU1 that ligates sulfur from thiocarboxylated URM1 onto the uridine of tRNAs at wobble position. This chain is Cytoplasmic tRNA 2-thiolation protein 2, found in Drosophila persimilis (Fruit fly).